The sequence spans 311 residues: Acetyl-coenzyme A carboxylase carboxyl transferase subunit alpha (311 aa).

One can recognise a CoA carboxyltransferase C-terminal domain in the interval 36 to 286 (NLEKEVAKVY…ASYFVSKLEK (251 aa)).

The protein belongs to the AccA family. Acetyl-CoA carboxylase is a heterohexamer composed of biotin carboxyl carrier protein (AccB), biotin carboxylase (AccC) and two subunits each of ACCase subunit alpha (AccA) and ACCase subunit beta (AccD).

The protein resides in the cytoplasm. The enzyme catalyses N(6)-carboxybiotinyl-L-lysyl-[protein] + acetyl-CoA = N(6)-biotinyl-L-lysyl-[protein] + malonyl-CoA. Its pathway is lipid metabolism; malonyl-CoA biosynthesis; malonyl-CoA from acetyl-CoA: step 1/1. Its function is as follows. Component of the acetyl coenzyme A carboxylase (ACC) complex. First, biotin carboxylase catalyzes the carboxylation of biotin on its carrier protein (BCCP) and then the CO(2) group is transferred by the carboxyltransferase to acetyl-CoA to form malonyl-CoA. In Campylobacter curvus (strain 525.92), this protein is Acetyl-coenzyme A carboxylase carboxyl transferase subunit alpha.